Consider the following 306-residue polypeptide: UDP-N-acetylenolpyruvoylglucosamine reductase (306 aa).

One can recognise an FAD-binding PCMH-type domain in the interval 30–216 (RIGGPVPYIL…KSKLIDFSTR (187 aa)). Residue R180 is part of the active site. Catalysis depends on S230, which acts as the Proton donor. E301 is a catalytic residue.

Belongs to the MurB family. FAD serves as cofactor.

Its subcellular location is the cytoplasm. It catalyses the reaction UDP-N-acetyl-alpha-D-muramate + NADP(+) = UDP-N-acetyl-3-O-(1-carboxyvinyl)-alpha-D-glucosamine + NADPH + H(+). It functions in the pathway cell wall biogenesis; peptidoglycan biosynthesis. Cell wall formation. This chain is UDP-N-acetylenolpyruvoylglucosamine reductase, found in Petrotoga mobilis (strain DSM 10674 / SJ95).